Here is a 475-residue protein sequence, read N- to C-terminus: Ribulose bisphosphate carboxylase large chain (475 aa).

Positions 1–2 are excised as a propeptide; sequence MS. Proline 3 carries the post-translational modification N-acetylproline. Lysine 14 is modified (N6,N6,N6-trimethyllysine). Positions 123 and 173 each coordinate substrate. The Proton acceptor role is filled by lysine 175. Lysine 177 contributes to the substrate binding site. Mg(2+) is bound by residues lysine 201, aspartate 203, and glutamate 204. Residue lysine 201 is modified to N6-carboxylysine. Residue histidine 294 is the Proton acceptor of the active site. Residues arginine 295, histidine 327, and serine 379 each coordinate substrate.

The protein belongs to the RuBisCO large chain family. Type I subfamily. Heterohexadecamer of 8 large chains and 8 small chains; disulfide-linked. The disulfide link is formed within the large subunit homodimers. It depends on Mg(2+) as a cofactor. In terms of processing, the disulfide bond which can form in the large chain dimeric partners within the hexadecamer appears to be associated with oxidative stress and protein turnover.

The protein localises to the plastid. Its subcellular location is the chloroplast. The enzyme catalyses 2 (2R)-3-phosphoglycerate + 2 H(+) = D-ribulose 1,5-bisphosphate + CO2 + H2O. It catalyses the reaction D-ribulose 1,5-bisphosphate + O2 = 2-phosphoglycolate + (2R)-3-phosphoglycerate + 2 H(+). Its function is as follows. RuBisCO catalyzes two reactions: the carboxylation of D-ribulose 1,5-bisphosphate, the primary event in carbon dioxide fixation, as well as the oxidative fragmentation of the pentose substrate in the photorespiration process. Both reactions occur simultaneously and in competition at the same active site. In Pelargonium hortorum (Common geranium), this protein is Ribulose bisphosphate carboxylase large chain.